The chain runs to 227 residues: NAD(P)H-hydrate epimerase (227 aa).

Residues 12–221 (SRLVDELAIA…DIGVPRALLE (210 aa)) form the YjeF N-terminal domain. 59 to 63 (NNGGD) provides a ligand contact to (6S)-NADPHX. K(+) contacts are provided by N60 and D131. (6S)-NADPHX contacts are provided by residues 135-141 (GTGATGE) and D164. A K(+)-binding site is contributed by T167.

It belongs to the NnrE/AIBP family. It depends on K(+) as a cofactor.

The catalysed reaction is (6R)-NADHX = (6S)-NADHX. It catalyses the reaction (6R)-NADPHX = (6S)-NADPHX. In terms of biological role, catalyzes the epimerization of the S- and R-forms of NAD(P)HX, a damaged form of NAD(P)H that is a result of enzymatic or heat-dependent hydration. This is a prerequisite for the S-specific NAD(P)H-hydrate dehydratase to allow the repair of both epimers of NAD(P)HX. This is NAD(P)H-hydrate epimerase from Pirellula staleyi (strain ATCC 27377 / DSM 6068 / ICPB 4128) (Pirella staleyi).